Consider the following 730-residue polypeptide: Protein groucho (730 aa).

The tract at residues 144-411 (QVPGGPPQPM…GKPAYSFHMN (268 aa)) is disordered. Basic and acidic residues predominate over residues 198 to 233 (AEERLRNSVSPADREKYRTRSPLDIENDSKRRKDEK). Phosphoserine is present on residues Ser-205, Ser-207, and Ser-218. A CCN domain region spans residues 206 to 267 (VSPADREKYR…SPRPNGEHVS (62 aa)). Residues 227-230 (KRRK) carry the Nuclear localization signal motif. Ser-242 carries the phosphoserine; by CK2 modification. Positions 254 to 283 (MESHSPRPNGEHVSMEVRDRESLNGERLEK) are enriched in basic and acidic residues. Position 258 is a phosphoserine; by CDC2 (Ser-258). Positions 262 to 425 (NGEHVSMEVR…LQPVPFPPDA (164 aa)) are binding to basic helix-loop-helix domain. The residue at position 267 (Ser-267) is a Phosphoserine. Composition is skewed to low complexity over residues 296–308 (SRSG…STPS), 322–345 (AKAR…QMMP), and 353–362 (YPGAPYQRPA). Phosphothreonine occurs at positions 326 and 328. Residues 366 to 382 (QRPPSDPAYGRPPPMPY) show a composition bias toward pro residues. WD repeat units lie at residues 442 to 480 (SHGE…NKNP), 488 to 527 (QRDN…PRIK), 532 to 571 (SAAP…LVRQ), 574 to 613 (GHTD…QLQQ), 615 to 654 (DFSS…KYQL), 656 to 695 (LHES…SIFQ), and 697 to 730 (KETS…EVIY).

It belongs to the WD repeat Groucho/TLE family. In terms of assembly, forms a complex with the hairy/Enhancer of split/deadpan family of basic helix-loop-helix proteins in order to repress transcription. Its activity in regulating transcription depends on other proteins as it lacks a DNA-binding motif. Interacts with hairy/hry (via WRPW motif). Ubiquitinated by XIAP/BIRC4. Ubiquitinated by hyd in response to Wnt signaling, leading to degradation by the proteasome.

Its subcellular location is the nucleus. Functionally, transcriptional corepressor that regulates transcription when recruited to specific target DNA by hairy-related bHLH proteins. Maternally required for neurogenesis; in the segregation of the neuroectoderm. Directly or indirectly interacts with Notch and Delta. The sequence is that of Protein groucho (gro) from Drosophila melanogaster (Fruit fly).